A 430-amino-acid polypeptide reads, in one-letter code: Adenylosuccinate synthetase (430 aa).

Residues Gly-13–Lys-19 and Gly-41–Thr-43 contribute to the GTP site. The Proton acceptor role is filled by Asp-14. The Mg(2+) site is built by Asp-14 and Gly-41. IMP contacts are provided by residues Asp-14–Lys-17, Asn-39–His-42, Thr-130, Arg-144, Gln-225, Thr-240, and Arg-304. His-42 (proton donor) is an active-site residue. Ala-300–Arg-306 lines the substrate pocket. GTP is bound by residues Arg-306, Lys-332–Asp-334, and Ser-414–Gly-416.

This sequence belongs to the adenylosuccinate synthetase family. Homodimer. Mg(2+) serves as cofactor.

The protein resides in the cytoplasm. The enzyme catalyses IMP + L-aspartate + GTP = N(6)-(1,2-dicarboxyethyl)-AMP + GDP + phosphate + 2 H(+). It participates in purine metabolism; AMP biosynthesis via de novo pathway; AMP from IMP: step 1/2. Its function is as follows. Plays an important role in the de novo pathway of purine nucleotide biosynthesis. Catalyzes the first committed step in the biosynthesis of AMP from IMP. In Xanthomonas campestris pv. campestris (strain 8004), this protein is Adenylosuccinate synthetase.